The primary structure comprises 533 residues: Metallothionein expression activator (533 aa).

2 consecutive C2H2-type zinc fingers follow at residues 443 to 472 (YVCL…SDRP) and 473 to 500 (YRCD…NGRP). The C2H2-type 3; atypical zinc finger occupies 501 to 524 (YVCECLKRFNRLDALNRHKQRNIC).

Its subcellular location is the nucleus. In terms of biological role, regulates the transcription of genes required for cell separation. This chain is Metallothionein expression activator (ace2), found in Schizosaccharomyces pombe (strain 972 / ATCC 24843) (Fission yeast).